Consider the following 262-residue polypeptide: Triosephosphate isomerase (262 aa).

13–15 (NWK) contacts substrate. Residue H103 is the Electrophile of the active site. E175 functions as the Proton acceptor in the catalytic mechanism. Substrate contacts are provided by residues G181, S221, and 242-243 (GG).

It belongs to the triosephosphate isomerase family. In terms of assembly, homodimer.

It is found in the cytoplasm. It catalyses the reaction D-glyceraldehyde 3-phosphate = dihydroxyacetone phosphate. It participates in carbohydrate biosynthesis; gluconeogenesis. The protein operates within carbohydrate degradation; glycolysis; D-glyceraldehyde 3-phosphate from glycerone phosphate: step 1/1. In terms of biological role, involved in the gluconeogenesis. Catalyzes stereospecifically the conversion of dihydroxyacetone phosphate (DHAP) to D-glyceraldehyde-3-phosphate (G3P). This Corynebacterium efficiens (strain DSM 44549 / YS-314 / AJ 12310 / JCM 11189 / NBRC 100395) protein is Triosephosphate isomerase.